The primary structure comprises 239 residues: Cyclo(L-leucyl-L-phenylalanyl) synthase (239 aa).

The active-site Nucleophile is Ser37. Residues Asn40, Tyr178–Glu182, and Tyr202 contribute to the substrate site.

Belongs to the CDPS family. In terms of assembly, monomer.

It catalyses the reaction L-phenylalanyl-tRNA(Phe) + L-leucyl-tRNA(Leu) = cyclo(L-phenylalanyl-L-leucyl) + tRNA(Phe) + tRNA(Leu) + H(+). In terms of biological role, involved in the biosynthesis of albonoursin (cyclo[(alpha,beta-dehydro-Phe)-(alpha,beta-dehydro-Leu)]), an antibacterial peptide. It uses activated amino acids in the form of aminoacyl-tRNAs (aa-tRNAs) as substrates to catalyze the ATP-independent formation of cyclodipeptides which are intermediates in diketopiperazine (DKP) biosynthetic pathways. Catalyzes the formation of cyclo(L-Phe-L-Leu) (cFL) as major products from L-L-phenylalanyl-tRNA(Phe) and L-leucyl-tRNA(Leu). AlbC can also incorporate various nonpolar residues, such as L-phenylalanine, L-leucine, L-tyrosine and L-methionine, and to a much lesser extent L-alanine and L-valine, into cyclodipeptides. Indeed, ten possible cyclodipeptides composed of L-phenylalanine, L-leucine, L-tyrosine and L-methionine are all synthesized to detectable amounts by AlbC. In Streptomyces noursei (Streptomyces albulus), this protein is Cyclo(L-leucyl-L-phenylalanyl) synthase (albC).